A 117-amino-acid chain; its full sequence is UPF0295 protein RBAM_008830 (117 aa).

2 helical membrane-spanning segments follow: residues Thr-13–Lys-33 and Leu-41–Gly-61.

This sequence belongs to the UPF0295 family.

It is found in the cell membrane. This Bacillus velezensis (strain DSM 23117 / BGSC 10A6 / LMG 26770 / FZB42) (Bacillus amyloliquefaciens subsp. plantarum) protein is UPF0295 protein RBAM_008830.